Reading from the N-terminus, the 145-residue chain is D-aminoacyl-tRNA deacylase (145 aa).

Positions 137-138 (GP) match the Gly-cisPro motif, important for rejection of L-amino acids motif.

Belongs to the DTD family. Homodimer.

Its subcellular location is the cytoplasm. The catalysed reaction is glycyl-tRNA(Ala) + H2O = tRNA(Ala) + glycine + H(+). The enzyme catalyses a D-aminoacyl-tRNA + H2O = a tRNA + a D-alpha-amino acid + H(+). Its function is as follows. An aminoacyl-tRNA editing enzyme that deacylates mischarged D-aminoacyl-tRNAs. Also deacylates mischarged glycyl-tRNA(Ala), protecting cells against glycine mischarging by AlaRS. Acts via tRNA-based rather than protein-based catalysis; rejects L-amino acids rather than detecting D-amino acids in the active site. By recycling D-aminoacyl-tRNA to D-amino acids and free tRNA molecules, this enzyme counteracts the toxicity associated with the formation of D-aminoacyl-tRNA entities in vivo and helps enforce protein L-homochirality. In Pseudomonas syringae pv. syringae (strain B728a), this protein is D-aminoacyl-tRNA deacylase.